Consider the following 458-residue polypeptide: (R)-6-hydroxynicotine oxidase (458 aa).

The region spanning 33 to 204 (RHLQRPSLIA…TEVEVQLYEL (172 aa)) is the FAD-binding PCMH-type domain. Residues 67-73 (RSGGHNP), 129-130 (HP), 134-137 (FCGL), glycine 144, threonine 195, asparagine 413, and asparagine 450 each bind FAD. At histidine 71 the chain carries Pros-8alpha-FAD histidine.

The protein belongs to the oxygen-dependent FAD-linked oxidoreductase family. In terms of assembly, monomer. FAD is required as a cofactor.

It localises to the cytoplasm. The catalysed reaction is (R)-6-hydroxynicotine + O2 + H2O = 6-hydroxypseudooxynicotine + H2O2. It carries out the reaction (R)-6-hydroxynicotine + O2 = 6-hydroxy-N-methylmyosmine + H2O2. It participates in alkaloid degradation; nicotine degradation; 6-hydroxypseudooxynicotine from nicotine (R-isomer route): step 2/2. With respect to regulation, inhibited by (S)-6-hydroxynicotine. Inhibited by high concentrations of phenanthroline. Its function is as follows. Involved in the degradation of D-nicotine. Catalyzes the oxidation of (R)-6-hydroxynicotine (6-hydroxy-D-nicotine) to 6-hydroxypseudooxynicotine. Oxidation of the pyrrolidine ring of (R)-6-hydroxynicotine leads to the formation of the optically inactive 6-hydroxy-N-methylmyosmine, which hydrolyzes spontaneously to 6-hydroxypseudooxynicotine. Acts with absolute stereospecificity on the D-form of 6-hydroxynicotine. Shows lower activity with (R)-6-hydroxynornicotine, and weak activity with (R)-4-(1-methylpyrrolidine-2-yl)phenol, (R)-6-chloronicotine and (R)-nicotine. This Paenarthrobacter nicotinovorans (Arthrobacter nicotinovorans) protein is (R)-6-hydroxynicotine oxidase.